Reading from the N-terminus, the 356-residue chain is Phenylalanine--tRNA ligase alpha subunit (356 aa).

E260 is a binding site for Mg(2+).

This sequence belongs to the class-II aminoacyl-tRNA synthetase family. Phe-tRNA synthetase alpha subunit type 1 subfamily. As to quaternary structure, tetramer of two alpha and two beta subunits. Requires Mg(2+) as cofactor.

Its subcellular location is the cytoplasm. It carries out the reaction tRNA(Phe) + L-phenylalanine + ATP = L-phenylalanyl-tRNA(Phe) + AMP + diphosphate + H(+). The protein is Phenylalanine--tRNA ligase alpha subunit of Gluconacetobacter diazotrophicus (strain ATCC 49037 / DSM 5601 / CCUG 37298 / CIP 103539 / LMG 7603 / PAl5).